Consider the following 122-residue polypeptide: Large ribosomal subunit protein uL14c (122 aa).

This sequence belongs to the universal ribosomal protein uL14 family. As to quaternary structure, part of the 50S ribosomal subunit.

It is found in the plastid. Its subcellular location is the chloroplast. Binds to 23S rRNA. In Eucalyptus globulus subsp. globulus (Tasmanian blue gum), this protein is Large ribosomal subunit protein uL14c.